We begin with the raw amino-acid sequence, 154 residues long: Probable biofilm-surface layer protein B (154 aa).

The N-terminal stretch at 1–30 (MLKRTSFVSSLFISSAVLLSILLPSGQAHA) is a signal peptide.

This sequence belongs to the BslA/BslB family. In terms of assembly, monomer in vitro.

It localises to the secreted. In terms of biological role, has a minor role in biofilm architecture. May contribute to the surface hydrophobicity. This Bacillus subtilis (strain 168) protein is Probable biofilm-surface layer protein B.